A 331-amino-acid polypeptide reads, in one-letter code: NADH-quinone oxidoreductase subunit H 2 (331 aa).

Transmembrane regions (helical) follow at residues 6 to 26 (AGFL…LLVA), 79 to 99 (IFML…AVIP), 120 to 140 (VGLL…ALGG), 155 to 175 (GAAQ…PVVM), 193 to 213 (PFIL…MAEI), 242 to 262 (LFFL…AVLF), 271 to 291 (LPPV…MIWV), and 310 to 330 (VLIP…LWMG).

This sequence belongs to the complex I subunit 1 family. NDH-1 is composed of 14 different subunits. Subunits NuoA, H, J, K, L, M, N constitute the membrane sector of the complex.

It is found in the cell inner membrane. It carries out the reaction a quinone + NADH + 5 H(+)(in) = a quinol + NAD(+) + 4 H(+)(out). Functionally, NDH-1 shuttles electrons from NADH, via FMN and iron-sulfur (Fe-S) centers, to quinones in the respiratory chain. The immediate electron acceptor for the enzyme in this species is believed to be ubiquinone. Couples the redox reaction to proton translocation (for every two electrons transferred, four hydrogen ions are translocated across the cytoplasmic membrane), and thus conserves the redox energy in a proton gradient. This subunit may bind ubiquinone. In Syntrophobacter fumaroxidans (strain DSM 10017 / MPOB), this protein is NADH-quinone oxidoreductase subunit H 2.